The chain runs to 416 residues: Adenylosuccinate synthetase (416 aa).

GTP is bound by residues 12 to 18 (GDEGKGK) and 40 to 42 (GHT). The active-site Proton acceptor is the Asp-13. Residues Asp-13 and Gly-40 each coordinate Mg(2+). Residues 13 to 16 (DEGK), 38 to 41 (NAGH), Thr-125, Arg-139, Gln-220, Thr-235, and Arg-299 contribute to the IMP site. The active-site Proton donor is the His-41. 295–301 (TTTGRPR) is a substrate binding site. GTP is bound by residues Arg-301, 327–329 (KLD), and 405–407 (STS).

This sequence belongs to the adenylosuccinate synthetase family. As to quaternary structure, homodimer. The cofactor is Mg(2+).

It is found in the cytoplasm. It carries out the reaction IMP + L-aspartate + GTP = N(6)-(1,2-dicarboxyethyl)-AMP + GDP + phosphate + 2 H(+). Its pathway is purine metabolism; AMP biosynthesis via de novo pathway; AMP from IMP: step 1/2. In terms of biological role, plays an important role in the de novo pathway of purine nucleotide biosynthesis. Catalyzes the first committed step in the biosynthesis of AMP from IMP. The sequence is that of Adenylosuccinate synthetase from Nitratiruptor sp. (strain SB155-2).